The following is a 159-amino-acid chain: Small ribosomal subunit protein uS17y (159 aa).

The protein belongs to the universal ribosomal protein uS17 family.

Its subcellular location is the cytoplasm. The polypeptide is Small ribosomal subunit protein uS17y (RPS11B) (Arabidopsis thaliana (Mouse-ear cress)).